The following is a 238-amino-acid chain: Valine-rich protein (238 aa).

A signal peptide spans methionine 1 to alanine 16.

As to expression, prismatic layer of shell (at protein level). Expressed primarily in the mantle with highest level in the mantle edge and lower level in the mantle pallium.

The protein resides in the secreted. This is Valine-rich protein from Margaritifera margaritifera (Freshwater pearl mussel).